Reading from the N-terminus, the 180-residue chain is Large ribosomal subunit protein uL5 (180 aa).

This sequence belongs to the universal ribosomal protein uL5 family. Part of the 50S ribosomal subunit; part of the 5S rRNA/L5/L18/L25 subcomplex. Contacts the 5S rRNA and the P site tRNA. Forms a bridge to the 30S subunit in the 70S ribosome.

Functionally, this is one of the proteins that bind and probably mediate the attachment of the 5S RNA into the large ribosomal subunit, where it forms part of the central protuberance. In the 70S ribosome it contacts protein S13 of the 30S subunit (bridge B1b), connecting the 2 subunits; this bridge is implicated in subunit movement. Contacts the P site tRNA; the 5S rRNA and some of its associated proteins might help stabilize positioning of ribosome-bound tRNAs. The chain is Large ribosomal subunit protein uL5 from Latilactobacillus sakei subsp. sakei (strain 23K) (Lactobacillus sakei subsp. sakei).